A 233-amino-acid chain; its full sequence is C-type lectin domain family 2 member D5 (233 aa).

The tract at residues 1–52 is disordered; the sequence is MPSSAHLQDPPPLLSRTLTQNEGQTSLRQSSSCGPSAASASESLSGSTESRI. Topologically, residues 1–76 are cytoplasmic; it reads MPSSAHLQDP…PLEYPAGLYC (76 aa). The segment covering 16 to 29 has biased composition (polar residues); it reads RTLTQNEGQTSLRQ. The span at 30 to 50 shows a compositional bias: low complexity; that stretch reads SSSCGPSAASASESLSGSTES. The chain crosses the membrane as a helical; Signal-anchor for type II membrane protein span at residues 77-97; sequence CYVVIIVLSVAVVALSVALSV. Residues 98 to 233 lie on the Extracellular side of the membrane; it reads KKTAQISTIN…KPNSYTSQCL (136 aa). One can recognise a C-type lectin domain in the interval 119 to 228; sequence VGNKCFYFNE…KSICRKPNSY (110 aa). The N-linked (GlcNAc...) asparagine glycan is linked to Asn-132.

The protein localises to the cell membrane. Functionally, lectin-type cell surface receptor. The chain is C-type lectin domain family 2 member D5 (Ocil) from Rattus norvegicus (Rat).